The following is a 363-amino-acid chain: Sulfate/thiosulfate import ATP-binding protein CysA (363 aa).

Positions 3 to 237 constitute an ABC transporter domain; sequence IEINNISKYF…PATRFVLEFL (235 aa). 35–42 lines the ATP pocket; it reads GPSGSGKT.

It belongs to the ABC transporter superfamily. Sulfate/tungstate importer (TC 3.A.1.6) family. In terms of assembly, the complex is composed of two ATP-binding proteins (CysA), two transmembrane proteins (CysT and CysW) and a solute-binding protein (CysP).

The protein localises to the cell inner membrane. It carries out the reaction sulfate(out) + ATP + H2O = sulfate(in) + ADP + phosphate + H(+). The enzyme catalyses thiosulfate(out) + ATP + H2O = thiosulfate(in) + ADP + phosphate + H(+). In terms of biological role, part of the ABC transporter complex CysAWTP involved in sulfate/thiosulfate import. Responsible for energy coupling to the transport system. The polypeptide is Sulfate/thiosulfate import ATP-binding protein CysA (Yersinia pseudotuberculosis serotype I (strain IP32953)).